The primary structure comprises 76 residues: Acyl carrier protein (76 aa).

Positions 1–76 (MSIEERVKKI…SAIDYVQNNQ (76 aa)) constitute a Carrier domain. Residue serine 36 is modified to O-(pantetheine 4'-phosphoryl)serine.

The protein belongs to the acyl carrier protein (ACP) family. Post-translationally, 4'-phosphopantetheine is transferred from CoA to a specific serine of apo-ACP by AcpS. This modification is essential for activity because fatty acids are bound in thioester linkage to the sulfhydryl of the prosthetic group.

Its subcellular location is the cytoplasm. Its pathway is lipid metabolism; fatty acid biosynthesis. Its function is as follows. Carrier of the growing fatty acid chain in fatty acid biosynthesis. The sequence is that of Acyl carrier protein from Haemophilus influenzae (strain 86-028NP).